Consider the following 495-residue polypeptide: Glycerol kinase (495 aa).

T11 contacts ADP. The ATP site is built by T11, T12, and S13. Position 11 (T11) interacts with sn-glycerol 3-phosphate. Residue R15 participates in ADP binding. Residues R81, E82, Y133, and D242 each coordinate sn-glycerol 3-phosphate. The glycerol site is built by R81, E82, Y133, D242, and Q243. 2 residues coordinate ADP: T264 and G307. ATP is bound by residues T264, G307, Q311, and G408. ADP is bound by residues G408 and N412.

This sequence belongs to the FGGY kinase family.

It catalyses the reaction glycerol + ATP = sn-glycerol 3-phosphate + ADP + H(+). It functions in the pathway polyol metabolism; glycerol degradation via glycerol kinase pathway; sn-glycerol 3-phosphate from glycerol: step 1/1. With respect to regulation, inhibited by fructose 1,6-bisphosphate (FBP). Key enzyme in the regulation of glycerol uptake and metabolism. Catalyzes the phosphorylation of glycerol to yield sn-glycerol 3-phosphate. The polypeptide is Glycerol kinase (Citrifermentans bemidjiense (strain ATCC BAA-1014 / DSM 16622 / JCM 12645 / Bem) (Geobacter bemidjiensis)).